A 554-amino-acid polypeptide reads, in one-letter code: DNA ligase (554 aa).

Glu253 is a binding site for ATP. Lys255 functions as the N6-AMP-lysine intermediate in the catalytic mechanism. Arg260, Arg275, Glu304, Phe344, Arg418, and Lys424 together coordinate ATP.

This sequence belongs to the ATP-dependent DNA ligase family. It depends on Mg(2+) as a cofactor.

The catalysed reaction is ATP + (deoxyribonucleotide)n-3'-hydroxyl + 5'-phospho-(deoxyribonucleotide)m = (deoxyribonucleotide)n+m + AMP + diphosphate.. In terms of biological role, DNA ligase that seals nicks in double-stranded DNA during DNA replication, DNA recombination and DNA repair. This Haloarcula marismortui (strain ATCC 43049 / DSM 3752 / JCM 8966 / VKM B-1809) (Halobacterium marismortui) protein is DNA ligase.